The sequence spans 77 residues: uncharacterized protein (77 aa).

Residues valine 13 to leucine 33 traverse the membrane as a helical segment.

It is found in the membrane. This is an uncharacterized protein from Saccharomyces cerevisiae (strain ATCC 204508 / S288c) (Baker's yeast).